Consider the following 241-residue polypeptide: 1-(5-phosphoribosyl)-5-[(5-phosphoribosylamino)methylideneamino] imidazole-4-carboxamide isomerase (241 aa).

Asp-8 functions as the Proton acceptor in the catalytic mechanism. Asp-127 functions as the Proton donor in the catalytic mechanism.

It belongs to the HisA/HisF family.

The protein resides in the cytoplasm. It catalyses the reaction 1-(5-phospho-beta-D-ribosyl)-5-[(5-phospho-beta-D-ribosylamino)methylideneamino]imidazole-4-carboxamide = 5-[(5-phospho-1-deoxy-D-ribulos-1-ylimino)methylamino]-1-(5-phospho-beta-D-ribosyl)imidazole-4-carboxamide. The protein operates within amino-acid biosynthesis; L-histidine biosynthesis; L-histidine from 5-phospho-alpha-D-ribose 1-diphosphate: step 4/9. This is 1-(5-phosphoribosyl)-5-[(5-phosphoribosylamino)methylideneamino] imidazole-4-carboxamide isomerase from Thermotoga petrophila (strain ATCC BAA-488 / DSM 13995 / JCM 10881 / RKU-1).